Here is a 335-residue protein sequence, read N- to C-terminus: MHLIIPDSYDPKLSVKDTQRAIRYIRETFQDEFGAQLNLSRLSAPMFVEKSTGLNDNLNGIEQPVSFTMQDMGDSQIEIVHSLAKWKRVALKRYGFNLHEGLYTNMNAIRKDEDLDNFHSAYVDQWDWEKVITKEERTLDTLKQTVRQIFKVIKHMEHEVWYKFPEAVHHLPDKIHFITTQELEDRFPDLTPRERENAITKELGCVFLMQIGGALKSGKRHDGRAPDYDDWQLNGDILFWYEPLKQAIEISSMGIRVDAESMQRQLKIADAEDRLSLPYHQMVLHEEVPFTIGGGIGQSRLCMLLLGKAHVGEVQAALWPQAMIDQCEAANIHLL.

This sequence belongs to the class-II aminoacyl-tRNA synthetase family. AsnA subfamily.

The protein localises to the cytoplasm. It carries out the reaction L-aspartate + NH4(+) + ATP = L-asparagine + AMP + diphosphate + H(+). The protein operates within amino-acid biosynthesis; L-asparagine biosynthesis; L-asparagine from L-aspartate (ammonia route): step 1/1. The chain is Aspartate--ammonia ligase from Levilactobacillus brevis (strain ATCC 367 / BCRC 12310 / CIP 105137 / JCM 1170 / LMG 11437 / NCIMB 947 / NCTC 947) (Lactobacillus brevis).